A 138-amino-acid polypeptide reads, in one-letter code: Probable phospholipase A2 homolog 1 (138 aa).

The first 21 residues, methionine 1–alanine 21, serve as a signal peptide directing secretion. Cystine bridges form between cysteine 29–cysteine 56, cysteine 33–cysteine 62, cysteine 38–cysteine 109, cysteine 49–cysteine 69, cysteine 68–cysteine 93, and cysteine 75–cysteine 86. Tyrosine 48, glycine 50, and tryptophan 53 together coordinate Ca(2+). Histidine 72 is an active-site residue. Residue aspartate 73 coordinates Ca(2+).

The protein belongs to the phospholipase A2 family. The cofactor is Ca(2+).

It localises to the secreted. The enzyme catalyses a 1,2-diacyl-sn-glycero-3-phosphocholine + H2O = a 1-acyl-sn-glycero-3-phosphocholine + a fatty acid + H(+). In terms of biological role, PA2 catalyzes the calcium-dependent hydrolysis of the 2-acyl groups in 3-sn-phosphoglycerides. Releases lysophospholipids (LPLs) and free fatty acids (FFAs) from membrane phospholipids in response to hormones and other external stimuli. This Oryza sativa subsp. japonica (Rice) protein is Probable phospholipase A2 homolog 1 (PLA2-I).